A 280-amino-acid chain; its full sequence is Aspartate/glutamate leucyltransferase (280 aa).

This sequence belongs to the R-transferase family. Bpt subfamily.

It localises to the cytoplasm. The enzyme catalyses N-terminal L-glutamyl-[protein] + L-leucyl-tRNA(Leu) = N-terminal L-leucyl-L-glutamyl-[protein] + tRNA(Leu) + H(+). It catalyses the reaction N-terminal L-aspartyl-[protein] + L-leucyl-tRNA(Leu) = N-terminal L-leucyl-L-aspartyl-[protein] + tRNA(Leu) + H(+). Functions in the N-end rule pathway of protein degradation where it conjugates Leu from its aminoacyl-tRNA to the N-termini of proteins containing an N-terminal aspartate or glutamate. In Cereibacter sphaeroides (strain ATCC 17023 / DSM 158 / JCM 6121 / CCUG 31486 / LMG 2827 / NBRC 12203 / NCIMB 8253 / ATH 2.4.1.) (Rhodobacter sphaeroides), this protein is Aspartate/glutamate leucyltransferase.